Consider the following 421-residue polypeptide: RNase J-like protein (421 aa).

H55, H57, D59, H60, H132, D153, and H389 together coordinate Zn(2+).

Belongs to the metallo-beta-lactamase superfamily. RNA-metabolizing metallo-beta-lactamase-like family. In terms of assembly, forms homodimers on heating to 60 degrees Celsius which may be the active form. Requires Zn(2+) as cofactor.

Its activity is regulated as follows. Inhibited by imidazole. Functionally, a 5'-3' exoribonuclease with a strong reference for 5'-monophosphorylated RNA and no endoribonuclease activty. In Methanocaldococcus jannaschii (strain ATCC 43067 / DSM 2661 / JAL-1 / JCM 10045 / NBRC 100440) (Methanococcus jannaschii), this protein is RNase J-like protein.